Here is a 196-residue protein sequence, read N- to C-terminus: Peroxynitrite isomerase (196 aa).

The GXWXGXG signature appears at 46–52 (GVWRGRG). Histidine 186 contacts heme b.

Belongs to the nitrobindin family. In terms of assembly, homodimer. Heme b is required as a cofactor.

It carries out the reaction peroxynitrite = nitrate. The protein operates within nitrogen metabolism. Functionally, heme-binding protein able to scavenge peroxynitrite and to protect free L-tyrosine against peroxynitrite-mediated nitration, by acting as a peroxynitrite isomerase that converts peroxynitrite to nitrate. Therefore, this protein likely plays a role in peroxynitrite sensing and in the detoxification of reactive nitrogen and oxygen species (RNS and ROS, respectively). Is able to bind nitric oxide (NO) in vitro, but may act as a sensor of peroxynitrite levels in vivo. This Salinispora tropica (strain ATCC BAA-916 / DSM 44818 / JCM 13857 / NBRC 105044 / CNB-440) protein is Peroxynitrite isomerase.